The primary structure comprises 415 residues: Serine hydroxymethyltransferase (415 aa).

Residues L120 and 124-126 each bind (6S)-5,6,7,8-tetrahydrofolate; that span reads GHL. Residue K229 is modified to N6-(pyridoxal phosphate)lysine.

The protein belongs to the SHMT family. In terms of assembly, homodimer. It depends on pyridoxal 5'-phosphate as a cofactor.

Its subcellular location is the cytoplasm. The enzyme catalyses (6R)-5,10-methylene-5,6,7,8-tetrahydrofolate + glycine + H2O = (6S)-5,6,7,8-tetrahydrofolate + L-serine. It functions in the pathway one-carbon metabolism; tetrahydrofolate interconversion. The protein operates within amino-acid biosynthesis; glycine biosynthesis; glycine from L-serine: step 1/1. Functionally, catalyzes the reversible interconversion of serine and glycine with tetrahydrofolate (THF) serving as the one-carbon carrier. This reaction serves as the major source of one-carbon groups required for the biosynthesis of purines, thymidylate, methionine, and other important biomolecules. Also exhibits THF-independent aldolase activity toward beta-hydroxyamino acids, producing glycine and aldehydes, via a retro-aldol mechanism. This is Serine hydroxymethyltransferase from Desulforudis audaxviator (strain MP104C).